The following is a 301-amino-acid chain: Ribosomal RNA small subunit methyltransferase A (301 aa).

6 residues coordinate S-adenosyl-L-methionine: Asn23, Ile25, Gly50, Glu72, Asp97, and Asn149.

Belongs to the class I-like SAM-binding methyltransferase superfamily. rRNA adenine N(6)-methyltransferase family. RsmA subfamily.

It is found in the cytoplasm. The enzyme catalyses adenosine(1518)/adenosine(1519) in 16S rRNA + 4 S-adenosyl-L-methionine = N(6)-dimethyladenosine(1518)/N(6)-dimethyladenosine(1519) in 16S rRNA + 4 S-adenosyl-L-homocysteine + 4 H(+). Its function is as follows. Specifically dimethylates two adjacent adenosines (A1518 and A1519) in the loop of a conserved hairpin near the 3'-end of 16S rRNA in the 30S particle. May play a critical role in biogenesis of 30S subunits. This chain is Ribosomal RNA small subunit methyltransferase A, found in Rickettsia peacockii (strain Rustic).